Consider the following 173-residue polypeptide: Crossover junction endodeoxyribonuclease RuvC (173 aa).

Catalysis depends on residues Asp-8, Glu-67, and Asp-139. Mg(2+) is bound by residues Asp-8, Glu-67, and Asp-139.

It belongs to the RuvC family. As to quaternary structure, homodimer which binds Holliday junction (HJ) DNA. The HJ becomes 2-fold symmetrical on binding to RuvC with unstacked arms; it has a different conformation from HJ DNA in complex with RuvA. In the full resolvosome a probable DNA-RuvA(4)-RuvB(12)-RuvC(2) complex forms which resolves the HJ. Requires Mg(2+) as cofactor.

Its subcellular location is the cytoplasm. It carries out the reaction Endonucleolytic cleavage at a junction such as a reciprocal single-stranded crossover between two homologous DNA duplexes (Holliday junction).. Functionally, the RuvA-RuvB-RuvC complex processes Holliday junction (HJ) DNA during genetic recombination and DNA repair. Endonuclease that resolves HJ intermediates. Cleaves cruciform DNA by making single-stranded nicks across the HJ at symmetrical positions within the homologous arms, yielding a 5'-phosphate and a 3'-hydroxyl group; requires a central core of homology in the junction. The consensus cleavage sequence is 5'-(A/T)TT(C/G)-3'. Cleavage occurs on the 3'-side of the TT dinucleotide at the point of strand exchange. HJ branch migration catalyzed by RuvA-RuvB allows RuvC to scan DNA until it finds its consensus sequence, where it cleaves and resolves the cruciform DNA. This chain is Crossover junction endodeoxyribonuclease RuvC, found in Serratia proteamaculans (strain 568).